Here is a 384-residue protein sequence, read N- to C-terminus: Kinesin-like protein KIF25 (384 aa).

Residues 1–20 (MTWTSGQLQREKQARPGSGA) form a disordered region. The Kinesin motor domain maps to 7–363 (QLQREKQARP…LGFGIRARQV (357 aa)). Residue 65 to 72 (GQTGSGKS) coordinates ATP. Disordered stretches follow at residues 217 to 256 (DQAC…NPAG) and 362 to 384 (QVQR…RRPD).

It belongs to the TRAFAC class myosin-kinesin ATPase superfamily. Kinesin family. As to quaternary structure, homotetramer.

The protein localises to the cytoplasm. It is found in the cytoskeleton. It localises to the microtubule organizing center. The protein resides in the centrosome. In terms of biological role, minus-end microtubule-dependent motor protein. Acts as a negative regulator of centrosome separation required to prevent premature centrosome separation during interphase. Required to maintain a centered nucleus to ensure that the spindle is stably oriented at the onset of mitosis. May also act as a negative regulator of amino acid starvation-induced autophagy. This chain is Kinesin-like protein KIF25, found in Homo sapiens (Human).